A 342-amino-acid polypeptide reads, in one-letter code: Protein pelota homolog (342 aa).

It belongs to the eukaryotic release factor 1 family. Pelota subfamily. As to quaternary structure, monomer. A divalent metal cation serves as cofactor.

The protein resides in the cytoplasm. Its function is as follows. May function in recognizing stalled ribosomes, interact with stem-loop structures in stalled mRNA molecules, and effect endonucleolytic cleavage of the mRNA. May play a role in the release non-functional ribosomes and degradation of damaged mRNAs. Has endoribonuclease activity. This is Protein pelota homolog from Sulfolobus acidocaldarius (strain ATCC 33909 / DSM 639 / JCM 8929 / NBRC 15157 / NCIMB 11770).